The chain runs to 171 residues: MDYFTLFGLPASYTLSLEQLAVRYQDLQRQYHPDKFASAPAAEQLAAVQHSATINQAWQTLRHPLTRAEYLLSLHGFDLASEQHTVRDTAFLMEQLELREELDEIGQAKDEARLEAFIKRVKALFDTRHQLMVEQLQNETWDAAADTVRKLRFLDKLRSSAEELEEKLLDF.

Positions 2-74 (DYFTLFGLPA…LTRAEYLLSL (73 aa)) constitute a J domain.

It belongs to the HscB family. In terms of assembly, interacts with HscA and stimulates its ATPase activity. Interacts with IscU.

In terms of biological role, co-chaperone involved in the maturation of iron-sulfur cluster-containing proteins. Seems to help targeting proteins to be folded toward HscA. This Klebsiella pneumoniae (strain 342) protein is Co-chaperone protein HscB.